A 991-amino-acid chain; its full sequence is Bone morphogenetic protein 1 (991 aa).

The signal sequence occupies residues Met1–Arg25. The propeptide occupies Ala26–Arg125. The disordered stretch occupies residues Ala86 to Pro131. Polar residues predominate over residues Gly95 to Gln110. Asn96 is a glycosylation site (N-linked (GlcNAc...) asparagine). The segment covering Arg116 to Ala127 has biased composition (basic residues). One can recognise a Peptidase M12A domain in the interval Ala126 to Pro325. N-linked (GlcNAc...) asparagine glycosylation is present at Asn147. 4 disulfides stabilise this stretch: Cys168-Cys324, Cys188-Cys210, Cys190-Cys191, and Cys327-Cys353. Residue His218 participates in Zn(2+) binding. Glu219 is an active-site residue. Positions 222 and 228 each coordinate Zn(2+). CUB domains lie at Cys327–Ile439 and Cys440–Lys551. Residues Asn337 and Asn368 are each glycosylated (N-linked (GlcNAc...) asparagine). 15 cysteine pairs are disulfide-bonded: Cys380–Cys402, Cys440–Cys466, Cys493–Cys515, Cys556–Cys568, Cys564–Cys577, Cys579–Cys592, Cys596–Cys622, Cys649–Cys671, Cys712–Cys723, Cys719–Cys732, Cys734–Cys747, Cys752–Cys778, Cys805–Cys827, Cys865–Cys895, and Cys922–Cys944. In terms of domain architecture, EGF-like 1; calcium-binding spans Glu552–Glu593. Residues Cys596–Ser707 enclose the CUB 3 domain. N-linked (GlcNAc...) asparagine glycosylation is present at Asn604. Residues Asp708–Lys748 form the EGF-like 2; calcium-binding domain. 2 consecutive CUB domains span residues Cys752–Glu864 and Cys865–Thr981. Residues Arg939 and Arg942 each carry the omega-N-methylarginine modification.

As to quaternary structure, interacts with POSTN, the interaction promotes deposition on the extracellular matrix. The cofactor is Zn(2+). At high levels in embryonic maternal deciduum and floor plate region of the neural tube. Less in developing membranous and endochondral bone, submucosa of intestine, dermis of skin and the mesenchyme of spleen and lung.

The protein resides in the golgi apparatus. Its subcellular location is the trans-Golgi network. It is found in the secreted. It localises to the extracellular space. The protein localises to the extracellular matrix. The enzyme catalyses Cleavage of the C-terminal propeptide at Ala-|-Asp in type I and II procollagens and at Arg-|-Asp in type III.. Its activity is regulated as follows. Activity is increased by the procollagen C-endopeptidase enhancer protein. Its function is as follows. Metalloprotease that plays key roles in regulating the formation of the extracellular matrix (ECM) via processing of various precursor proteins into mature functional enzymes or structural proteins. Thereby participates in several developmental and physiological processes such as cartilage and bone formation, muscle growth and homeostasis, wound healing and tissue repair. Roles in ECM formation include cleavage of the C-terminal propeptides from procollagens such as procollagen I, II and III or the proteolytic activation of the enzyme lysyl oxidase LOX, necessary to formation of covalent cross-links in collagen and elastic fibers. Additional substrates include matricellular thrombospondin-1/THBS1 whose cleavage leads to cell adhesion disruption and TGF-beta activation. The polypeptide is Bone morphogenetic protein 1 (Bmp1) (Mus musculus (Mouse)).